The sequence spans 362 residues: Transcription factor Sox-7 (362 aa).

The interval 19 to 41 is disordered; the sequence is MDGDLSDGLSPHRSPREKGSETR. The segment covering 32–41 has biased composition (basic and acidic residues); it reads SPREKGSETR. The segment at residues 42-110 is a DNA-binding region (HMG box); that stretch reads IRRPMNAFMV…QHMQDYPNYK (69 aa). Positions 246–362 constitute a Sox C-terminal domain; the sequence is QPGSSMIPPV…ATYYNSYSVS (117 aa).

In terms of tissue distribution, localized to the vegetal hemisphere of blastula embryos. Tissue-specific expression in early neurula (stage 13-14) embryos begins in the ciliate cells of the epidermis. Starting about stage 24, expression is found in a lateral stripe on each side of the embryo, with expression extending more posteriorly as development proceeds. Expressed in embryonic vasculature, as well as in the procardia tube, endocardium, notochord and hindbrain. As development proceeds, strong expression is seen in the hindbrain, posterior cardinal veins, aortic arch, stomodeal depression, epithelium and intersomitic arteries of stage 33/34 larvae. Expressed in posterior rhombomeres. By stage 40 larvae, expression in most of the vascular endothelia disappears, in particular in the posterior cardinal vein, but expression continues in the hindbrain. Expressed in a wide range of adult tissues, including ovary, testis, kidney, bladder, duodenum and liver.

The protein resides in the nucleus. Its function is as follows. Transcription factor. Binds to the DNA sequence 5'-AACAAT-3'. Acts downstream of vegt and upstream of nodal signaling to promote endodermal and mesodermal differentiation by promoting vegt-induced expression of both endodermal genes (including endodermin) and mesodermal genes (including snai1/snail and snai2/slug). Induces expression of multiple nodal genes (including nodal, nodal2, nodal4, nodal5 and nodal6) and binds directly to sites within the promoter of the nodal5 gene. The endodermal and mesodermal specification pathways then interact to initiate cardiogenesis. Acts partially redundantly with sox18 during cardiogenesis. Also acts as an antagonist of beta-catenin signaling. Regulates (possibly indirectly) development of the pronephros, the functional larval kidney. This Xenopus laevis (African clawed frog) protein is Transcription factor Sox-7 (sox7).